An 876-amino-acid polypeptide reads, in one-letter code: Alanine--tRNA ligase (876 aa).

The Zn(2+) site is built by His-560, His-564, Cys-662, and His-666.

The protein belongs to the class-II aminoacyl-tRNA synthetase family. Requires Zn(2+) as cofactor.

The protein resides in the cytoplasm. It carries out the reaction tRNA(Ala) + L-alanine + ATP = L-alanyl-tRNA(Ala) + AMP + diphosphate. In terms of biological role, catalyzes the attachment of alanine to tRNA(Ala) in a two-step reaction: alanine is first activated by ATP to form Ala-AMP and then transferred to the acceptor end of tRNA(Ala). Also edits incorrectly charged Ser-tRNA(Ala) and Gly-tRNA(Ala) via its editing domain. The sequence is that of Alanine--tRNA ligase from Synechococcus sp. (strain ATCC 27144 / PCC 6301 / SAUG 1402/1) (Anacystis nidulans).